The chain runs to 320 residues: Cytochrome f (320 aa).

An N-terminal signal peptide occupies residues 1–35 (MQTKNTFSWIKKEIIRSISVSLMIYIIARTSISNA). Heme-binding residues include tyrosine 36, cysteine 56, cysteine 59, and histidine 60. A helical transmembrane segment spans residues 286–306 (VQGLLFFLASVILAQIFLVLK).

The protein belongs to the cytochrome f family. In terms of assembly, the 4 large subunits of the cytochrome b6-f complex are cytochrome b6, subunit IV (17 kDa polypeptide, petD), cytochrome f and the Rieske protein, while the 4 small subunits are PetG, PetL, PetM and PetN. The complex functions as a dimer. It depends on heme as a cofactor.

The protein localises to the plastid. It is found in the chloroplast thylakoid membrane. Its function is as follows. Component of the cytochrome b6-f complex, which mediates electron transfer between photosystem II (PSII) and photosystem I (PSI), cyclic electron flow around PSI, and state transitions. The protein is Cytochrome f of Eucalyptus globulus subsp. globulus (Tasmanian blue gum).